The sequence spans 353 residues: Membrane lipoprotein TmpC (353 aa).

The first 20 residues, Met1–Gly20, serve as a signal peptide directing secretion. A lipid anchor (N-palmitoyl cysteine) is attached at Cys21. Cys21 is lipidated: S-diacylglycerol cysteine. Asp47 serves as a coordination point for guanosine. Asp47 contributes to the inosine binding site. Residues Asp47–Ser48 and Phe56 contribute to the adenosine site. Guanosine is bound by residues Asn57, Asp128, Phe206, Gly232, Asp258, and Lys280. Asn57 and Asp128 together coordinate inosine. Positions 128, 206, 232, 258, and 280 each coordinate adenosine. Inosine contacts are provided by Gly232, Asp258, and Lys280.

This sequence belongs to the BMP lipoprotein family. Monomer.

It localises to the cell membrane. Functionally, binds purine nucleosides and may play a role in purine nucleoside uptake. May be part of an ABC-type nucleoside uptake system. Has highest affinity for guanosine, followed by inosine and adenosine. Has very low affinity for cytidine and does not bind thymidine. The polypeptide is Membrane lipoprotein TmpC (tmpC) (Treponema pallidum (strain Nichols)).